A 185-amino-acid chain; its full sequence is Capsid protein (185 aa).

Residues asparagine 136–cysteine 185 are disordered. Positions valine 149–serine 178 are enriched in basic residues. 3 positions are modified to phosphoserine; by host: serine 157, serine 164, and serine 172. A 1; half-length repeat occupies serine 157–proline 163. The interval serine 157–glutamine 179 is 3 X 8 AA repeats of S-P-R-R-R-[PR]-S-Q. Positions arginine 160 to arginine 177 match the Bipartite nuclear localization signal motif. Repeat copies occupy residues serine 164–glutamine 171 and serine 172–glutamine 179. The RNA binding stretch occupies residues glutamine 179–cysteine 185.

This sequence belongs to the orthohepadnavirus core antigen family. As to quaternary structure, homodimerizes, then multimerizes. Interacts with cytosol exposed regions of viral L glycoprotein present in the reticulum-to-Golgi compartment. Interacts with human FLNB. Phosphorylated form interacts with host importin alpha; this interaction depends on the exposure of the NLS, which itself depends upon genome maturation and/or phosphorylation of the capsid protein. Interacts with host NUP153. In terms of processing, phosphorylated by host SRPK1, SRPK2, and maybe protein kinase C or GAPDH. Phosphorylation is critical for pregenomic RNA packaging. Protein kinase C phosphorylation is stimulated by HBx protein and may play a role in transport of the viral genome to the nucleus at the late step during the viral replication cycle.

It localises to the virion. The protein resides in the host cytoplasm. In terms of biological role, self assembles to form an icosahedral capsid. Most capsids appear to be large particles with an icosahedral symmetry of T=4 and consist of 240 copies of capsid protein, though a fraction forms smaller T=3 particles consisting of 180 capsid proteins. Entering capsids are transported along microtubules to the nucleus. Phosphorylation of the capsid is thought to induce exposure of nuclear localization signal in the C-terminal portion of the capsid protein that allows binding to the nuclear pore complex via the importin (karyopherin-) alpha and beta. Capsids are imported in intact form through the nuclear pore into the nuclear basket, where it probably binds NUP153. Only capsids that contain the mature viral genome can release the viral DNA and capsid protein into the nucleoplasm. Immature capsids get stuck in the basket. Capsids encapsulate the pre-genomic RNA and the P protein. Pre-genomic RNA is reverse-transcribed into DNA while the capsid is still in the cytoplasm. The capsid can then either be directed to the nucleus, providing more genomes for transcription, or bud through the endoplasmic reticulum to provide new virions. The chain is Capsid protein from Homo sapiens (Human).